The chain runs to 138 residues: Basic phospholipase A2 BP-I (138 aa).

Residues 1 to 16 (MRTLWIMAVLLLGVDG) form the signal peptide. 7 disulfide bridges follow: cysteine 42–cysteine 132, cysteine 44–cysteine 60, cysteine 59–cysteine 112, cysteine 65–cysteine 138, cysteine 66–cysteine 105, cysteine 73–cysteine 98, and cysteine 91–cysteine 103. 2 residues coordinate Ca(2+): glycine 45 and glycine 47. Residue histidine 63 is part of the active site. The active site involves aspartate 106.

The protein belongs to the phospholipase A2 family. Group II subfamily. K49 sub-subfamily. Ca(2+) is required as a cofactor. In terms of tissue distribution, expressed by the venom gland.

The protein localises to the secreted. The catalysed reaction is a 1,2-diacyl-sn-glycero-3-phosphocholine + H2O = a 1-acyl-sn-glycero-3-phosphocholine + a fatty acid + H(+). Functionally, snake venom phospholipase A2 (PLA2) that has strong myotoxic activity with a low phospholipase A2 activity. PLA2 catalyzes the calcium-dependent hydrolysis of the 2-acyl groups in 3-sn-phosphoglycerides. The polypeptide is Basic phospholipase A2 BP-I (Protobothrops flavoviridis (Habu)).